The following is a 627-amino-acid chain: Glutamine--fructose-6-phosphate aminotransferase [isomerizing] (627 aa).

Cys-2 (nucleophile; for GATase activity) is an active-site residue. In terms of domain architecture, Glutamine amidotransferase type-2 spans 2–224 (CGIVGYIGTQ…NGEIARLTPL (223 aa)). SIS domains are found at residues 293 to 442 (LPEN…HRQT) and 476 to 617 (LAHE…VDQP). Catalysis depends on Lys-622, which acts as the For Fru-6P isomerization activity.

As to quaternary structure, homodimer.

It is found in the cytoplasm. It carries out the reaction D-fructose 6-phosphate + L-glutamine = D-glucosamine 6-phosphate + L-glutamate. Its function is as follows. Catalyzes the first step in hexosamine metabolism, converting fructose-6P into glucosamine-6P using glutamine as a nitrogen source. In Nostoc sp. (strain PCC 9229), this protein is Glutamine--fructose-6-phosphate aminotransferase [isomerizing].